Here is a 940-residue protein sequence, read N- to C-terminus: Fibronectin-binding protein B (940 aa).

Positions 1–36 are cleaved as a signal peptide; that stretch reads MKSNLRYGIRKHKLGAASVFLGTMIVVGMGQEKEAA. The segment at 36 to 111 is disordered; it reads AASEQNNTTV…PKVETSRVDL (76 aa). Polar residues predominate over residues 38-92; it reads SEQNNTTVEESGSSATESKASETQTTTNNVNTIDETQSYSATSTEQPSQSTQVTT. Positions 162-480 are fibrinogen/elastin/tropoelastin-binding; it reads TGTDVTNKVE…AQGDGKDKLK (319 aa). Disordered stretches follow at residues 676 to 746, 764 to 878, and 892 to 918; these read LGYE…NIID, IIEE…GKVV, and VPTKKAQSKKSELPETGGEESTNNGML. The D-1 repeat unit spans residues 681 to 718; sequence GQNSGNQSFEEDTEEDKPKYEQGGNIVDIDFDSVPQIH. The stretch at 719 to 756 is one D-2 repeat; it reads GQNNGNQSFEEDTEKDKPKYEQGGNIIDIDFDSVPHIH. The stretch at 757 to 795 is one D-3 repeat; sequence GFNKHTEIIEEDTNKDKPNYQFGGHNSVDFEEDTLPQVS. The span at 764–774 shows a compositional bias: basic and acidic residues; sequence IIEEDTNKDKP. The span at 792–802 shows a compositional bias: polar residues; the sequence is PQVSGHNEGQQ. Residues 796 to 814 form a D-4; truncated repeat; sequence GHNEGQQTIEEDTTPPIVP. Residues 811–860 show a composition bias toward pro residues; it reads PIVPPTPPTPEVPSEPETPTPPTPEVPSEPETPTPPTPEVPTEPGKPIPP. WR repeat units follow at residues 815-828, 829-842, and 857-870; these read PTPPTPEVPSEPET and PIPPAKEEPKKPSK. The LPXTG sorting signal motif lies at 904–908; it reads LPETG. Residue threonine 907 is modified to Pentaglycyl murein peptidoglycan amidated threonine. A propeptide spans 908–940 (removed by sortase); sequence GGEESTNNGMLFGGLFSILGLALLRRNKKNHKA.

As to quaternary structure, interacts with host PLG; this interaction provides active plasmin on the surface of bacteria cells. Interacts with host histones.

It is found in the secreted. Its subcellular location is the cell wall. Functionally, multifunctional protein which promotes bacterial attachment to fibrinogen, elastin and fibronectin. Also promotes the accumulation phase and the primary attachment phase of biofilm formation. In addition, protects against the antimicrobial activity of histones. Mechanistically, captures histones and prevents them from reaching the bacterial membrane and simultaneously binds plasminogen, thereby promoting its conversion to plasmin to destroy the bound histones. In Staphylococcus aureus (strain USA300), this protein is Fibronectin-binding protein B.